The sequence spans 130 residues: Iron-sulfur cluster insertion protein ErpA 2 (130 aa).

Positions 58, 122, and 124 each coordinate iron-sulfur cluster.

It belongs to the HesB/IscA family. As to quaternary structure, homodimer. The cofactor is iron-sulfur cluster.

In terms of biological role, required for insertion of 4Fe-4S clusters for at least IspG. The chain is Iron-sulfur cluster insertion protein ErpA 2 from Methylococcus capsulatus (strain ATCC 33009 / NCIMB 11132 / Bath).